The following is a 227-amino-acid chain: uncharacterized protein (227 aa).

The N-terminal stretch at 1–21 (MELKKIAVGLTALLGMSVANA) is a signal peptide.

This is an uncharacterized protein from Haemophilus influenzae (strain ATCC 51907 / DSM 11121 / KW20 / Rd).